Reading from the N-terminus, the 259-residue chain is Thiazole synthase (259 aa).

Lysine 98 acts as the Schiff-base intermediate with DXP in catalysis. Residues glycine 159, 185–186 (AG), and 207–208 (NS) each bind 1-deoxy-D-xylulose 5-phosphate.

Belongs to the ThiG family. In terms of assembly, homotetramer. Forms heterodimers with either ThiH or ThiS.

The protein localises to the cytoplasm. It carries out the reaction [ThiS sulfur-carrier protein]-C-terminal-Gly-aminoethanethioate + 2-iminoacetate + 1-deoxy-D-xylulose 5-phosphate = [ThiS sulfur-carrier protein]-C-terminal Gly-Gly + 2-[(2R,5Z)-2-carboxy-4-methylthiazol-5(2H)-ylidene]ethyl phosphate + 2 H2O + H(+). The protein operates within cofactor biosynthesis; thiamine diphosphate biosynthesis. Its function is as follows. Catalyzes the rearrangement of 1-deoxy-D-xylulose 5-phosphate (DXP) to produce the thiazole phosphate moiety of thiamine. Sulfur is provided by the thiocarboxylate moiety of the carrier protein ThiS. In vitro, sulfur can be provided by H(2)S. The protein is Thiazole synthase of Chlorobium phaeobacteroides (strain DSM 266 / SMG 266 / 2430).